The sequence spans 256 residues: Sorbitol dehydrogenase (256 aa).

Residues 15 to 17 (RGI), D36, 59 to 60 (DV), N86, Y152, K156, and 182 to 187 (PGVVDG) contribute to the NAD(+) site. Residue Y152 is the Proton acceptor of the active site.

Belongs to the short-chain dehydrogenases/reductases (SDR) family. Homodimer. May function as a tetramer in vivo.

The enzyme catalyses keto-D-fructose + NADH + H(+) = D-sorbitol + NAD(+). It carries out the reaction galactitol + NAD(+) = keto-D-tagatose + NADH + H(+). It catalyses the reaction L-iditol + NAD(+) = keto-L-sorbose + NADH + H(+). Its activity is regulated as follows. Inhibited by DTT, N-bromosuccinimide and iodoacetic acid. Catalyzes the oxidation of D-sorbitol (D-glucitol) to D-fructose. Can also catalyze the oxidation of galactitol to D-tagatose and the oxidation of L-iditol, with lower efficiency. The chain is Sorbitol dehydrogenase (polS) from Cereibacter sphaeroides (Rhodobacter sphaeroides).